Reading from the N-terminus, the 139-residue chain is Small ribosomal subunit protein uS11 (139 aa).

The segment at 1-33 is disordered; sequence MPPAKKGPATSARKGQKTRRREKKNVPHGAAHI. Basic residues predominate over residues 14-23; that stretch reads KGQKTRRREK.

This sequence belongs to the universal ribosomal protein uS11 family. As to quaternary structure, part of the 30S ribosomal subunit. Interacts with proteins S7 and S18. Binds to IF-3.

Functionally, located on the platform of the 30S subunit, it bridges several disparate RNA helices of the 16S rRNA. Forms part of the Shine-Dalgarno cleft in the 70S ribosome. This is Small ribosomal subunit protein uS11 from Mycobacterium bovis (strain ATCC BAA-935 / AF2122/97).